Consider the following 375-residue polypeptide: 23S rRNA (uracil(747)-C(5))-methyltransferase RlmC (375 aa).

[4Fe-4S] cluster contacts are provided by C3, C11, C14, and C87. S-adenosyl-L-methionine is bound by residues Q212, F241, E262, and N307. C334 serves as the catalytic Nucleophile.

This sequence belongs to the class I-like SAM-binding methyltransferase superfamily. RNA M5U methyltransferase family. RlmC subfamily.

It catalyses the reaction uridine(747) in 23S rRNA + S-adenosyl-L-methionine = 5-methyluridine(747) in 23S rRNA + S-adenosyl-L-homocysteine + H(+). In terms of biological role, catalyzes the formation of 5-methyl-uridine at position 747 (m5U747) in 23S rRNA. This Serratia proteamaculans (strain 568) protein is 23S rRNA (uracil(747)-C(5))-methyltransferase RlmC.